A 358-amino-acid chain; its full sequence is Putative glycylpeptide N-tetradecanoyltransferase (358 aa).

It belongs to the NMT family.

The catalysed reaction is N-terminal glycyl-[protein] + tetradecanoyl-CoA = N-tetradecanoylglycyl-[protein] + CoA + H(+). Its function is as follows. Adds a myristoyl group to the N-terminal glycine residue of certain proteins. This Acanthamoeba polyphaga (Amoeba) protein is Putative glycylpeptide N-tetradecanoyltransferase.